Consider the following 267-residue polypeptide: Trehalose 2-sulfotransferase (267 aa).

Alpha,alpha-trehalose contacts are provided by residues glutamine 14, 33-39 (EPQEFFQ), proline 48, and tryptophan 53. Catalysis depends on glutamate 36, which acts as the Proton acceptor.

Belongs to the Stf0 sulfotransferase family. In terms of assembly, homodimer.

It carries out the reaction alpha,alpha-trehalose + 3'-phosphoadenylyl sulfate = 2-O-sulfo-alpha,alpha-trehalose + adenosine 3',5'-bisphosphate + H(+). Its pathway is glycolipid metabolism. Functionally, catalyzes the sulfuryl group transfer from 3'-phosphoadenosine-5'-phosphosulfate (PAPS) to trehalose, leading to trehalose-2-sulfate (T2S). The sulfation of trehalose is the first step in the biosynthesis of sulfolipid-1 (SL-1), a major cell wall glycolipid in pathogenic mycobacteria. Cannot use free glucose and unnatural stereoisomers of trehalose (alpha,beta (neo-trehalose) and beta,beta (iso-trehalose)) as substrates. This chain is Trehalose 2-sulfotransferase, found in Mycolicibacterium smegmatis (strain ATCC 700084 / mc(2)155) (Mycobacterium smegmatis).